The primary structure comprises 908 residues: Protein translocase subunit SecA (908 aa).

Residues glutamine 90, 108 to 112, and aspartate 503 each bind ATP; that span reads GEGKT. The span at 846-864 shows a compositional bias: low complexity; it reads AAAAEAPVAPAPQPAAAAP. The tract at residues 846 to 884 is disordered; it reads AAAAEAPVAPAPQPAAAAPQPTPELVGAEAGEPDPAAWG. The Zn(2+) site is built by cysteine 892, cysteine 894, cysteine 903, and histidine 904.

Belongs to the SecA family. As to quaternary structure, monomer and homodimer. Part of the essential Sec protein translocation apparatus which comprises SecA, SecYEG and auxiliary proteins SecDF-YajC and YidC. Zn(2+) is required as a cofactor.

Its subcellular location is the cell inner membrane. The protein resides in the cytoplasm. The enzyme catalyses ATP + H2O + cellular proteinSide 1 = ADP + phosphate + cellular proteinSide 2.. Its function is as follows. Part of the Sec protein translocase complex. Interacts with the SecYEG preprotein conducting channel. Has a central role in coupling the hydrolysis of ATP to the transfer of proteins into and across the cell membrane, serving both as a receptor for the preprotein-SecB complex and as an ATP-driven molecular motor driving the stepwise translocation of polypeptide chains across the membrane. This Cereibacter sphaeroides (strain ATCC 17029 / ATH 2.4.9) (Rhodobacter sphaeroides) protein is Protein translocase subunit SecA.